A 537-amino-acid chain; its full sequence is Chaperonin GroEL (537 aa).

Residues 30–33 (TLGP), 87–91 (DGTTT), Gly414, 477–479 (DAV), and Asp493 each bind ATP.

It belongs to the chaperonin (HSP60) family. As to quaternary structure, forms a cylinder of 14 subunits composed of two heptameric rings stacked back-to-back. Interacts with the co-chaperonin GroES.

It localises to the cytoplasm. It catalyses the reaction ATP + H2O + a folded polypeptide = ADP + phosphate + an unfolded polypeptide.. Its function is as follows. Together with its co-chaperonin GroES, plays an essential role in assisting protein folding. The GroEL-GroES system forms a nano-cage that allows encapsulation of the non-native substrate proteins and provides a physical environment optimized to promote and accelerate protein folding. The sequence is that of Chaperonin GroEL from Coprothermobacter proteolyticus (strain ATCC 35245 / DSM 5265 / OCM 4 / BT).